Reading from the N-terminus, the 1244-residue chain is SWI/SNF chromatin remodeling complex subunit swsn-7 (1244 aa).

The ARID domain occupies 24 to 116 (QRKMAEFYNS…YLSKFEQVET (93 aa)). Over residues 486-496 (FTQGSNQQQNP) the composition is skewed to polar residues. Disordered regions lie at residues 486–534 (FTQG…GAAP), 556–583 (NREQ…ILAH), and 597–619 (DRRT…ESQL). The segment covering 497–508 (HHSQGGHQLGHS) has biased composition (low complexity). The span at 556–566 (NREQYSTQSSQ) shows a compositional bias: polar residues. Over residues 567–578 (PHPPHTNVPPSP) the composition is skewed to pro residues. Over residues 610-619 (PSTNSGESQL) the composition is skewed to polar residues. Residues 623–697 (TEKWIRQNCV…IVAQGIRLIR (75 aa)) constitute a DNA-binding region (RFX-type winged-helix). Residues 1134–1244 (EEEQQKMLSE…TTPVRAGAGI (111 aa)) are disordered. Positions 1142–1158 (SEVPSSASLSSMAGSSS) are enriched in low complexity. Polar residues-rich tracts occupy residues 1159-1186 (QLPT…SNKP) and 1194-1212 (LNFS…FTAG). The segment covering 1220 to 1231 (PIQQHIPSQPSP) has biased composition (low complexity).

As to quaternary structure, component of the SWI/SNF-B (PBAF) chromatin remodeling complex.

Its subcellular location is the nucleus. Its function is as follows. Involved in transcriptional activation and repression of select genes by chromatin remodeling (alteration of DNA-nucleosome topology). Required for the stability of the SWI/SNF chromatin remodeling complex SWI/SNF-B (PBAF). Required for regulation of a stress response gene network, probably as part of the PBAF complex and perhaps acting in concert with histone demethylase jmjc-1. Binds to the ethanol and stress response elements (ESRE) in the promoter regions of hsp-16.1 and hsp-16.2, probably as part of the PBAF complex. The protein is SWI/SNF chromatin remodeling complex subunit swsn-7 of Caenorhabditis elegans.